Reading from the N-terminus, the 404-residue chain is Floricaula/leafy-like protein FL1 (404 aa).

Residues 210-251 (IGVPEHSSESDERKADTNKQKRRRSKEPGEDGEDRPREHPFI) form a disordered region. 2 stretches are compositionally biased toward basic and acidic residues: residues 215 to 228 (HSSE…DTNK) and 235 to 249 (KEPG…REHP). DNA-binding regions lie at residues 246-250 (REHPF), 315-322 (NKPKMRHY), and 386-389 (YVPT).

It belongs to the FLO/LFY family. In terms of tissue distribution, expressed in both male and female cones, vegetative buds and needles, but not in the roots.

The protein resides in the nucleus. Its function is as follows. Probable transcription factor. The chain is Floricaula/leafy-like protein FL1 from Pinus radiata (Monterey pine).